Consider the following 487-residue polypeptide: 26S proteasome non-ATPase regulatory subunit 3 homolog B (487 aa).

The tract at residues 1-21 is disordered; it reads MTQDVEMKDNQTPTQSVVSAP. Residues 10–21 are compositionally biased toward polar residues; that stretch reads NQTPTQSVVSAP. The PCI domain occupies 239–420; that stretch reads CRYLFYLGKI…GCMVSKETGD (182 aa). Residues 452-487 are disordered; it reads PPNTHREKESEEKRREMKQQEEELAKYMAEEDDDDF. Residues 455–480 show a composition bias toward basic and acidic residues; that stretch reads THREKESEEKRREMKQQEEELAKYMA.

This sequence belongs to the proteasome subunit S3 family. As to quaternary structure, component of the 19S regulatory particle (RP/PA700) lid subcomplex of the 26S proteasome. The 26S proteasome is composed of a core protease (CP), known as the 20S proteasome, capped at one or both ends by the 19S regulatory particle (RP/PA700). The RP/PA700 complex is composed of at least 17 different subunits in two subcomplexes, the base and the lid, which form the portions proximal and distal to the 20S proteolytic core, respectively. Interacts with UCH1 and UCH2. Preferentially expressed in flowers.

Acts as a regulatory subunit of the 26 proteasome which is involved in the ATP-dependent degradation of ubiquitinated proteins. In Arabidopsis thaliana (Mouse-ear cress), this protein is 26S proteasome non-ATPase regulatory subunit 3 homolog B.